The sequence spans 476 residues: Bifunctional protein HldE (476 aa).

A ribokinase region spans residues 1-318; sequence MKPILPDYNN…AEAIHGSRDT (318 aa). Residue 195–198 participates in ATP binding; the sequence is NMSE. The active site involves Asp264. Residues 344–476 are cytidylyltransferase; it reads MTNGCFDILH…IIDAIKGGRG (133 aa).

The protein in the N-terminal section; belongs to the carbohydrate kinase PfkB family. In the C-terminal section; belongs to the cytidylyltransferase family. Homodimer.

It carries out the reaction D-glycero-beta-D-manno-heptose 7-phosphate + ATP = D-glycero-beta-D-manno-heptose 1,7-bisphosphate + ADP + H(+). It catalyses the reaction D-glycero-beta-D-manno-heptose 1-phosphate + ATP + H(+) = ADP-D-glycero-beta-D-manno-heptose + diphosphate. It functions in the pathway nucleotide-sugar biosynthesis; ADP-L-glycero-beta-D-manno-heptose biosynthesis; ADP-L-glycero-beta-D-manno-heptose from D-glycero-beta-D-manno-heptose 7-phosphate: step 1/4. It participates in nucleotide-sugar biosynthesis; ADP-L-glycero-beta-D-manno-heptose biosynthesis; ADP-L-glycero-beta-D-manno-heptose from D-glycero-beta-D-manno-heptose 7-phosphate: step 3/4. Its pathway is bacterial outer membrane biogenesis; LPS core biosynthesis. Its function is as follows. Catalyzes the phosphorylation of D-glycero-D-manno-heptose 7-phosphate at the C-1 position to selectively form D-glycero-beta-D-manno-heptose-1,7-bisphosphate. In terms of biological role, catalyzes the ADP transfer from ATP to D-glycero-beta-D-manno-heptose 1-phosphate, yielding ADP-D-glycero-beta-D-manno-heptose. The sequence is that of Bifunctional protein HldE from Vibrio vulnificus (strain YJ016).